A 236-amino-acid chain; its full sequence is 2,3,4,5-tetrahydropyridine-2,6-dicarboxylate N-acetyltransferase (236 aa).

Belongs to the transferase hexapeptide repeat family. DapH subfamily.

The enzyme catalyses (S)-2,3,4,5-tetrahydrodipicolinate + acetyl-CoA + H2O = L-2-acetamido-6-oxoheptanedioate + CoA. It participates in amino-acid biosynthesis; L-lysine biosynthesis via DAP pathway; LL-2,6-diaminopimelate from (S)-tetrahydrodipicolinate (acetylase route): step 1/3. Functionally, catalyzes the transfer of an acetyl group from acetyl-CoA to tetrahydrodipicolinate. The polypeptide is 2,3,4,5-tetrahydropyridine-2,6-dicarboxylate N-acetyltransferase (Clostridium perfringens (strain ATCC 13124 / DSM 756 / JCM 1290 / NCIMB 6125 / NCTC 8237 / Type A)).